The primary structure comprises 703 residues: Polyribonucleotide nucleotidyltransferase (703 aa).

2 residues coordinate Mg(2+): Asp485 and Asp491. Positions 552 to 611 (PRIYTLKIDQDKIRDVIGKGGAMIRSITEASDTNIEIEDDGTIKIFATERAKADIAISKI) constitute a KH domain. An S1 motif domain is found at 621–689 (GKTYEGKVTR…RQNRVRLSIK (69 aa)).

The protein belongs to the polyribonucleotide nucleotidyltransferase family. As to quaternary structure, component of the RNA degradosome, which is a multiprotein complex involved in RNA processing and mRNA degradation. Requires Mg(2+) as cofactor.

The protein resides in the cytoplasm. It catalyses the reaction RNA(n+1) + phosphate = RNA(n) + a ribonucleoside 5'-diphosphate. Its function is as follows. Involved in mRNA degradation. Catalyzes the phosphorolysis of single-stranded polyribonucleotides processively in the 3'- to 5'-direction. This chain is Polyribonucleotide nucleotidyltransferase, found in Pseudoalteromonas atlantica (strain T6c / ATCC BAA-1087).